Reading from the N-terminus, the 302-residue chain is MNQTAINRADVRTRFIFDDMPVRGLHVRLENVWQHIVKQKNYPAAIRRALGELLAAGVLLSGNLKNEGTLIVQVQGQGRLKMLVAEATSDRTVRATARWDETAEIADDESLGDLLGEGGVFVLTLQPKDGEPWQGVVPLEGDGIAQMLVNYMKRSEQLDTHIVLSASDEAAGGLLVQRLPEEVLDEEAWEHVSTLARTLTAEELAGLDAQHVLYRLFHETPPRVFEPETFEFSCTCSRGKVSDMLLMLGGEEVGGVVVEQGSIEVDCDFCHSKYVFDETDVNALFGEDVVGVAKGLPRHTVQ.

2 cysteine pairs are disulfide-bonded: Cys234/Cys236 and Cys267/Cys270.

The protein belongs to the HSP33 family. Post-translationally, under oxidizing conditions two disulfide bonds are formed involving the reactive cysteines. Under reducing conditions zinc is bound to the reactive cysteines and the protein is inactive.

It localises to the cytoplasm. Redox regulated molecular chaperone. Protects both thermally unfolding and oxidatively damaged proteins from irreversible aggregation. Plays an important role in the bacterial defense system toward oxidative stress. In Neisseria meningitidis serogroup A / serotype 4A (strain DSM 15465 / Z2491), this protein is 33 kDa chaperonin.